The following is a 58-amino-acid chain: Mu-diguetoxin-Dc1b (58 aa).

4 disulfide bridges follow: cysteine 12–cysteine 26, cysteine 20–cysteine 40, cysteine 25–cysteine 54, and cysteine 42–cysteine 52.

The protein belongs to the neurotoxin 26 (DTX) family. As to expression, expressed by the venom gland.

The protein localises to the secreted. Its function is as follows. Acts by delaying the inactivation of presynaptic voltage-sensitive sodium channels (Nav). Acts against insects and cause a progressive spastic paralysis. The chain is Mu-diguetoxin-Dc1b from Diguetia canities (Desert bush spider).